Consider the following 371-residue polypeptide: Protein NDRG2 (371 aa).

A disordered region spans residues 1–21 (MAELQEVQITEEKPLLPGQTP). An N-acetylalanine modification is found at A2. The residue at position 20 (T20) is a Phosphothreonine. A phosphoserine mark is found at S326 and S328. At T330 the chain carries Phosphothreonine. Phosphoserine is present on S332. The residue at position 334 (T334) is a Phosphothreonine. The disordered stretch occupies residues 334-371 (TSAASVDGNRSRSRTLSQSSESGTLSSGPPGHTMEVSC). Phosphoserine is present on residues S335, S338, and S344. Positions 347–361 (RTLSQSSESGTLSSG) are enriched in low complexity. Position 348 is a phosphothreonine (T348). Phosphoserine is present on residues S350, S352, S353, and S355. A Phosphothreonine modification is found at T357. Position 370 is a phosphoserine (S370).

This sequence belongs to the NDRG family. As to quaternary structure, interacts with CTNNB1.

The protein resides in the cytoplasm. It localises to the perinuclear region. It is found in the cell projection. The protein localises to the growth cone. Functionally, contributes to the regulation of the Wnt signaling pathway. Down-regulates CTNNB1-mediated transcriptional activation of target genes, such as CCND1, and may thereby act as tumor suppressor. May be involved in dendritic cell and neuron differentiation. The chain is Protein NDRG2 (NDRG2) from Pongo abelii (Sumatran orangutan).